The following is a 271-amino-acid chain: Centromere protein K (271 aa).

2 coiled-coil regions span residues 11-44 and 102-151; these read DTIT…QNKL and LRCD…VENQ.

This sequence belongs to the CENP-K/MCM22 family. In terms of assembly, component of the CENPA-CAD complex, composed of CENPI, CENPK, CENPL, CENPO, CENPP, CENPQ, CENPR and CENPS. The CENPA-CAD complex interacts with the CENPA-NAC complex, at least composed of CENPA, CENPC, CENPH, CENPM, CENPN, CENPT and CENPU. May interact with Sox6. As to expression, highly expressed in testis.

The protein resides in the nucleus. It localises to the chromosome. The protein localises to the centromere. Its subcellular location is the kinetochore. Its function is as follows. Component of the CENPA-CAD (nucleosome distal) complex, a complex recruited to centromeres which is involved in assembly of kinetochore proteins, mitotic progression and chromosome segregation. May be involved in incorporation of newly synthesized CENPA into centromeres via its interaction with the CENPA-NAC complex. Acts in coordination with KNL1 to recruit the NDC80 complex to the outer kinetochore. The polypeptide is Centromere protein K (Cenpk) (Mus musculus (Mouse)).